Reading from the N-terminus, the 393-residue chain is MSIKTVKDFSSFAGKRALVRCDFNVPLKEGSISDDTRIRAALSTIEYLKERGARIVLVSHLGRPDGKKNSKYSLKPVANRLSELLGQDVKMLSDCIGSEVVNSTLQMKDGDVVLLENVRFYAEEEKNDKNFAKKLSENGDVFVNDAFGAAHRAHASTVGVADYLPSVGGFLMEKEDKFLGGILKNPERPFVSIIGGSKVSSKIAVLESLLSKSNVVVIGGGMAYTFLHSEGYSIGKSLLEDEYIGIASSFLKKAKELGVKVILPLDHIVADDFNKNSIPEYINSFNIPENKIGMDIGANTLKEIEKVVKTAKTIIWNGPLGVFEFDSFSKGTAKVAEMVASCSGLTVVGGGDSVAAVNKFNLSDKITHVSTGGGASLEYLEGRILPGIKVLEN.

Substrate-binding positions include 22-24, R37, 60-63, R119, and R152; these read DFN and HLGR. Residues K202, G293, E324, and 350–353 contribute to the ATP site; that span reads GGDS.

Belongs to the phosphoglycerate kinase family. In terms of assembly, monomer.

The protein localises to the cytoplasm. The enzyme catalyses (2R)-3-phosphoglycerate + ATP = (2R)-3-phospho-glyceroyl phosphate + ADP. It functions in the pathway carbohydrate degradation; glycolysis; pyruvate from D-glyceraldehyde 3-phosphate: step 2/5. The sequence is that of Phosphoglycerate kinase from Borreliella burgdorferi (strain ZS7) (Borrelia burgdorferi).